A 396-amino-acid chain; its full sequence is Phosphoglycerate kinase (396 aa).

Substrate-binding positions include 21–23 (DLN), R36, 59–62 (HLGR), R113, and R146. ATP-binding positions include K197, E319, and 345-348 (GGDT).

The protein belongs to the phosphoglycerate kinase family. In terms of assembly, monomer.

It is found in the cytoplasm. It catalyses the reaction (2R)-3-phosphoglycerate + ATP = (2R)-3-phospho-glyceroyl phosphate + ADP. Its pathway is carbohydrate degradation; glycolysis; pyruvate from D-glyceraldehyde 3-phosphate: step 2/5. The sequence is that of Phosphoglycerate kinase from Legionella pneumophila (strain Lens).